Here is a 157-residue protein sequence, read N- to C-terminus: Deoxyuridine 5'-triphosphate nucleotidohydrolase (157 aa).

Substrate is bound by residues arginine 76–glycine 78, asparagine 89, threonine 93–aspartate 95, and lysine 103.

It belongs to the dUTPase family. The cofactor is Mg(2+).

The enzyme catalyses dUTP + H2O = dUMP + diphosphate + H(+). It functions in the pathway pyrimidine metabolism; dUMP biosynthesis; dUMP from dCTP (dUTP route): step 2/2. In terms of biological role, this enzyme is involved in nucleotide metabolism: it produces dUMP, the immediate precursor of thymidine nucleotides and it decreases the intracellular concentration of dUTP so that uracil cannot be incorporated into DNA. This chain is Deoxyuridine 5'-triphosphate nucleotidohydrolase, found in Brucella abortus (strain 2308).